The primary structure comprises 452 residues: Dimethyladenosine transferase 2, mitochondrial (452 aa).

S-adenosyl-L-methionine-binding residues include isoleucine 46, glutamate 99, and aspartate 125. A disordered region spans residues 408-452 (ANDEPNLEDGVTLPEEDDAEADEIIEEESPVPATTPVKRRRKASS). The span at 421 to 436 (PEEDDAEADEIIEEES) shows a compositional bias: acidic residues.

The protein belongs to the class I-like SAM-binding methyltransferase superfamily. rRNA adenine N(6)-methyltransferase family. KsgA subfamily.

It is found in the mitochondrion. Its function is as follows. Probable S-adenosyl-L-methionine-dependent methyltransferase which specifically dimethylates mitochondrial 12S rRNA at the conserved stem loop. Also required for basal transcription of mitochondrial DNA. Also regulates mitochondrial DNA copy number. Stimulates transcription independently of the methyltransferase activity. The chain is Dimethyladenosine transferase 2, mitochondrial (mtTFB2) from Drosophila melanogaster (Fruit fly).